Reading from the N-terminus, the 190-residue chain is Large ribosomal subunit protein bL9 (190 aa).

The protein belongs to the bacterial ribosomal protein bL9 family.

Functionally, binds to the 23S rRNA. The polypeptide is Large ribosomal subunit protein bL9 (Methylobacterium radiotolerans (strain ATCC 27329 / DSM 1819 / JCM 2831 / NBRC 15690 / NCIMB 10815 / 0-1)).